Consider the following 469-residue polypeptide: MTQDGTWSDESDWELDDADLADLAEAAPAPVLAIVGRPNVGKSTLVNRILGRREAVVQDIPGVTRDRVSYDALWNGRRFVVQDTGGWEPDAKGLQQLVAEQASVAMRTADAVVLVVDATVGATTADEAAARILLRSGKPVFLAANKVDSDKAEADAATLWSMGLGEPHAISAMHGRGVANLLDTVLKKLPEVAESVSAGGGPRRVALVGKPNVGKSSLLNKLAGDERSVVHDVAGTTVDPVDSLIELGGKVWRFVDTAGLRRKVGQASGHEFYASVRTRGAIDAAEVVVLLIDASQPLTEQDLRVLSMVIEAGRAVVLAYNKWDLVDEDRRDLLDREIDRELVQIRWAQRVNISAKTGRAVQKLVPAMETALASWDTRIPTGPLNSWIKEVVAATPPPVRGGKQPRILFATQATARPPTFVLFTTGFLEAGYRRFLERRLRETFGFEGSPIRINVRVREKRGAKRPGRR.

EngA-type G domains are found at residues 30-193 (PVLA…PEVA) and 203-376 (RRVA…ASWD). Residues 36-43 (GRPNVGKS), 83-87 (DTGGW), 145-148 (NKVD), 209-216 (GKPNVGKS), 256-260 (DTAGL), and 321-324 (NKWD) contribute to the GTP site. One can recognise a KH-like domain in the interval 377-459 (TRIPTGPLNS…PIRINVRVRE (83 aa)).

This sequence belongs to the TRAFAC class TrmE-Era-EngA-EngB-Septin-like GTPase superfamily. EngA (Der) GTPase family. As to quaternary structure, associates with the 50S ribosomal subunit.

Functionally, GTPase that plays an essential role in the late steps of ribosome biogenesis. In Mycobacterium ulcerans (strain Agy99), this protein is GTPase Der.